Here is a 227-residue protein sequence, read N- to C-terminus: Large ribosomal subunit protein uL10c (227 aa).

The N-terminal 47 residues, 1-47 (MEATFFTLPSSTSHSYPFSLKSHFNNSLTLPTHPHFKPKSKNLTIRS), are a transit peptide targeting the chloroplast.

The protein belongs to the universal ribosomal protein uL10 family. Part of the 50S ribosomal subunit.

The protein localises to the plastid. It localises to the chloroplast. Functionally, this protein binds directly to 23S ribosomal RNA. In Nicotiana tabacum (Common tobacco), this protein is Large ribosomal subunit protein uL10c (RPL10).